Reading from the N-terminus, the 495-residue chain is MNTHVKPSKLIKGATGDWEIIIGLEVHAQVTSRSKLFSGASTQFGAEPNSNVSLVDAAMPGMLPVINEECVAQAVRTGLGLKAQINLRSVFDRKNYFYPDLPQGYQISQYKSPIVGEGIVIVDVSPTEQIEVGIERLHLEQDAGKSLHDQSATDSFVDLNRSGVALMEIVSKPDMRSADEARAYVSKLRTILRYLGTCDGNMEQGSLRADVNVSVRRPGEPFGTRCEIKNVNSIRFIGQAIETEARRQIGILEDGGVIDQETRLFDPGKGETRSMRSKEEAHDYRYFPDPDLLPLEFDQAYVDGLASALPELPDAKKARFMNDYGLPAYDAGVLVADKETADYYETTVNYNGVKRDPKLVANWVTGDVAAYANSVGLPVSQTHLTPAQIATLVDLISEEVISGKIAKDVLAILINEDKAGDPRTIVEARGLKQVTDTGAIEAAVDAIIAANPDKVAQAQAKPTMLGWFVGQVMKQTGGKANPQAVNEILKAKLGI.

Belongs to the GatB/GatE family. GatB subfamily. As to quaternary structure, heterotrimer of A, B and C subunits.

The enzyme catalyses L-glutamyl-tRNA(Gln) + L-glutamine + ATP + H2O = L-glutaminyl-tRNA(Gln) + L-glutamate + ADP + phosphate + H(+). It catalyses the reaction L-aspartyl-tRNA(Asn) + L-glutamine + ATP + H2O = L-asparaginyl-tRNA(Asn) + L-glutamate + ADP + phosphate + 2 H(+). Allows the formation of correctly charged Asn-tRNA(Asn) or Gln-tRNA(Gln) through the transamidation of misacylated Asp-tRNA(Asn) or Glu-tRNA(Gln) in organisms which lack either or both of asparaginyl-tRNA or glutaminyl-tRNA synthetases. The reaction takes place in the presence of glutamine and ATP through an activated phospho-Asp-tRNA(Asn) or phospho-Glu-tRNA(Gln). This Beijerinckia indica subsp. indica (strain ATCC 9039 / DSM 1715 / NCIMB 8712) protein is Aspartyl/glutamyl-tRNA(Asn/Gln) amidotransferase subunit B.